Consider the following 256-residue polypeptide: Non-structural protein 1 (256 aa).

The protein resides in the host cytoplasm. It is found in the host perinuclear region. Functionally, plays a role in inhibition of the host innate immune system by counteracting the type I interferon signaling. The protein is Non-structural protein 1 of Infectious salmon anemia virus (isolate Atlantic salmon/Norway/810/9/99) (ISAV).